Here is a 331-residue protein sequence, read N- to C-terminus: Probable allantoicase (331 aa).

This sequence belongs to the allantoicase family.

It carries out the reaction allantoate + H2O = (S)-ureidoglycolate + urea. Its pathway is nitrogen metabolism; (S)-allantoin degradation; (S)-ureidoglycolate from allantoate (aminidohydrolase route): step 1/1. This is Probable allantoicase from Pseudomonas savastanoi pv. phaseolicola (strain 1448A / Race 6) (Pseudomonas syringae pv. phaseolicola (strain 1448A / Race 6)).